A 107-amino-acid chain; its full sequence is Nucleoid-associated protein YaaK (107 aa).

The tract at residues 1–24 (MRGGMGNMQKMMKQMQKMQKDMAK) is disordered. The span at 8–17 (MQKMMKQMQK) shows a compositional bias: low complexity.

Belongs to the YbaB/EbfC family. As to quaternary structure, homodimer.

The protein resides in the cytoplasm. The protein localises to the nucleoid. Its function is as follows. Binds to DNA and alters its conformation. May be involved in regulation of gene expression, nucleoid organization and DNA protection. The sequence is that of Nucleoid-associated protein YaaK (yaaK) from Bacillus subtilis (strain 168).